The primary structure comprises 96 residues: Neurotoxin beta-KTx 31.1 (96 aa).

A signal peptide spans 1-21 (MQAKRTILLLLLLGMVALSSC). Residues 22–29 (GLREKHVQ) constitute a propeptide that is removed on maturation. The BetaSPN-type CS-alpha/beta domain maps to 56–93 (QYGCPIIKDYCSFHCNDLEKHEGYCHGTKCKCNIPNQY). Disulfide bonds link Cys-59–Cys-80, Cys-66–Cys-85, and Cys-70–Cys-87.

The protein belongs to the long chain scorpion toxin family. Class 1 subfamily. Expressed by the venom gland.

Its subcellular location is the secreted. Its function is as follows. Inhibits voltage-gated potassium channel. In Lychas mucronatus (Chinese swimming scorpion), this protein is Neurotoxin beta-KTx 31.1.